The following is a 357-amino-acid chain: D(4) dopamine receptor (357 aa).

Topologically, residues 1 to 32 (MGNRSAADADGLLAGRGPGTGGGAGSPGAAAA) are extracellular. Asn-3 is a glycosylation site (N-linked (GlcNAc...) asparagine). The helical transmembrane segment at 33–55 (LVGGVLLIGAVLAGNALVCVSVA) threads the bilayer. Topologically, residues 56–65 (AERALQTPTN) are cytoplasmic. Residues 66–88 (YFIVSLAAADLLLALLVLPLFVY) form a helical membrane-spanning segment. Residue Asp-75 participates in Na(+) binding. The Extracellular portion of the chain corresponds to 89 to 104 (SEVQGGVWQFSPGLCD). An intrachain disulfide couples Cys-103 to Cys-180. A helical transmembrane segment spans residues 105–126 (ALMAMDVMLCTASIFNLCAISA). Na(+) is bound at residue Ser-117. Topologically, residues 127-146 (DRFVAVAVPLSYNRQSGGGR) are cytoplasmic. Residues 147–170 (QLLLIGATWLLSAAVAAPVLCGLN) form a helical membrane-spanning segment. Residues 171–186 (DARGRDPAVCRLEDRD) lie on the Extracellular side of the membrane. The helical transmembrane segment at 187–208 (YVVYSSVCSFFLPCPVMLLLYW) threads the bilayer. At 209-284 (ATFRGLRRWE…ITGRERKAMR (76 aa)) the chain is on the cytoplasmic side. A disordered region spans residues 225-261 (LHGRRPRRPSGPGPPPPEAVETPEAPEAIPTPDATLA). The segment covering 233–242 (PSGPGPPPPE) has biased composition (pro residues). Residues 243-259 (AVETPEAPEAIPTPDAT) are compositionally biased toward low complexity. Residues 285 to 307 (VLPVVVGAFLVCWTPFFVVHITG) form a helical membrane-spanning segment. At 308–316 (ALCPACAVP) the chain is on the extracellular side. Cys-310 and Cys-313 form a disulfide bridge. Residues 317 to 339 (PRLVSAVTWLGYVNSALNPLIYT) traverse the membrane as a helical segment. Topologically, residues 340–357 (VFNAEFRAVFRKALRLCC) are cytoplasmic. A lipid anchor (S-palmitoyl cysteine) is attached at Cys-357.

Belongs to the G-protein coupled receptor 1 family. As to quaternary structure, forms homo- and heterooligomers with DRD2. D4.7 allele exhibits higher affinity for homodimers compared to DRD2 heterodimers, while alleles D42. and 4.4 have similar affinities for both. The interaction with DRD2 may modulate agonist-induced downstream signaling. Interacts with CLIC6. Interacts with GPRASP1. May interact with ADORA2A. Interacts with KLHL12. Polyubiquitinated by the BCR(KLHL12) E3 ubiquitin ligase complex: polyubiquitination does not lead to degradation of DRD4 protein. In terms of processing, palmitoylated. Palmitoylation of the C-terminal Cys is important for normal expression at the cell membrane.

It localises to the cell membrane. Functionally, dopamine receptor responsible for neuronal signaling in the mesolimbic system of the brain, an area of the brain that regulates emotion and complex behavior. Activated by dopamine, but also by epinephrine and norepinephrine, and by numerous synthetic agonists and drugs. Agonist binding triggers signaling via G proteins that inhibit adenylyl cyclase. Modulates the circadian rhythm of contrast sensitivity by regulating the rhythmic expression of NPAS2 in the retinal ganglion cells. The polypeptide is D(4) dopamine receptor (DRD4) (Mustela putorius furo (European domestic ferret)).